Reading from the N-terminus, the 1407-residue chain is DNA-directed RNA polymerase subunit beta' (1407 aa).

4 residues coordinate Zn(2+): C70, C72, C85, and C88. Mg(2+) is bound by residues D460, D462, and D464. Residues C814, C888, C895, and C898 each coordinate Zn(2+).

This sequence belongs to the RNA polymerase beta' chain family. As to quaternary structure, the RNAP catalytic core consists of 2 alpha, 1 beta, 1 beta' and 1 omega subunit. When a sigma factor is associated with the core the holoenzyme is formed, which can initiate transcription. Mg(2+) is required as a cofactor. It depends on Zn(2+) as a cofactor.

The enzyme catalyses RNA(n) + a ribonucleoside 5'-triphosphate = RNA(n+1) + diphosphate. In terms of biological role, DNA-dependent RNA polymerase catalyzes the transcription of DNA into RNA using the four ribonucleoside triphosphates as substrates. The polypeptide is DNA-directed RNA polymerase subunit beta' (Cellvibrio japonicus (strain Ueda107) (Pseudomonas fluorescens subsp. cellulosa)).